The primary structure comprises 342 residues: Probable transposase for insertion-like sequence element IS1161 (342 aa).

The 161-residue stretch at 182-342 folds into the Integrase catalytic domain; sequence IEERPEEINN…KKLFELTQTA (161 aa).

Belongs to the transposase IS30 family.

In terms of biological role, required for the transposition of the insertion element. The protein is Probable transposase for insertion-like sequence element IS1161 of Streptococcus salivarius.